The chain runs to 515 residues: Lysine--tRNA ligase (515 aa).

Mg(2+) is bound by residues glutamate 425 and glutamate 432.

It belongs to the class-II aminoacyl-tRNA synthetase family. As to quaternary structure, homodimer. The cofactor is Mg(2+).

It localises to the cytoplasm. The catalysed reaction is tRNA(Lys) + L-lysine + ATP = L-lysyl-tRNA(Lys) + AMP + diphosphate. The sequence is that of Lysine--tRNA ligase from Cupriavidus metallidurans (strain ATCC 43123 / DSM 2839 / NBRC 102507 / CH34) (Ralstonia metallidurans).